The following is a 94-amino-acid chain: MKISREEVEHVAFLARLELTEEELVTNTEQLNSILDYAAMLEKLNTDDIKPTAHAVPLHNVLREDQVKPSMAREKVLANAPDAQDGFFKVPRIV.

This sequence belongs to the GatC family. In terms of assembly, heterotrimer of A, B and C subunits.

The catalysed reaction is L-glutamyl-tRNA(Gln) + L-glutamine + ATP + H2O = L-glutaminyl-tRNA(Gln) + L-glutamate + ADP + phosphate + H(+). The enzyme catalyses L-aspartyl-tRNA(Asn) + L-glutamine + ATP + H2O = L-asparaginyl-tRNA(Asn) + L-glutamate + ADP + phosphate + 2 H(+). In terms of biological role, allows the formation of correctly charged Asn-tRNA(Asn) or Gln-tRNA(Gln) through the transamidation of misacylated Asp-tRNA(Asn) or Glu-tRNA(Gln) in organisms which lack either or both of asparaginyl-tRNA or glutaminyl-tRNA synthetases. The reaction takes place in the presence of glutamine and ATP through an activated phospho-Asp-tRNA(Asn) or phospho-Glu-tRNA(Gln). This chain is Aspartyl/glutamyl-tRNA(Asn/Gln) amidotransferase subunit C, found in Desulfitobacterium hafniense (strain DSM 10664 / DCB-2).